Here is a 171-residue protein sequence, read N- to C-terminus: Ribosome maturation factor RimM (171 aa).

The region spanning 94 to 168 is the PRC barrel domain; that stretch reads NDEFYKDELI…MTIVPPEIVG (75 aa).

This sequence belongs to the RimM family. As to quaternary structure, binds ribosomal protein uS19.

It localises to the cytoplasm. Its function is as follows. An accessory protein needed during the final step in the assembly of 30S ribosomal subunit, possibly for assembly of the head region. Essential for efficient processing of 16S rRNA. May be needed both before and after RbfA during the maturation of 16S rRNA. It has affinity for free ribosomal 30S subunits but not for 70S ribosomes. In Anaplasma phagocytophilum (strain HZ), this protein is Ribosome maturation factor RimM.